The sequence spans 144 residues: Large ribosomal subunit protein uL15 (144 aa).

Residues 1–51 (MQLNTLSPAQGEKKSRKRVGRGIGSGIGKTCGSGHKGQKSRSGGFNKIGFE) form a disordered region. Residues 21 to 35 (RGIGSGIGKTCGSGH) show a composition bias toward gly residues.

It belongs to the universal ribosomal protein uL15 family. Part of the 50S ribosomal subunit.

Binds to the 23S rRNA. The sequence is that of Large ribosomal subunit protein uL15 from Vesicomyosocius okutanii subsp. Calyptogena okutanii (strain HA).